Here is a 469-residue protein sequence, read N- to C-terminus: UDP-N-acetylmuramate--L-alanine ligase (469 aa).

Residue 118–124 participates in ATP binding; it reads GTHGKTT.

This sequence belongs to the MurCDEF family.

It localises to the cytoplasm. The catalysed reaction is UDP-N-acetyl-alpha-D-muramate + L-alanine + ATP = UDP-N-acetyl-alpha-D-muramoyl-L-alanine + ADP + phosphate + H(+). The protein operates within cell wall biogenesis; peptidoglycan biosynthesis. In terms of biological role, cell wall formation. The polypeptide is UDP-N-acetylmuramate--L-alanine ligase (Lachnoclostridium phytofermentans (strain ATCC 700394 / DSM 18823 / ISDg) (Clostridium phytofermentans)).